A 94-amino-acid chain; its full sequence is Pyrimidine/purine nucleoside phosphorylase (94 aa).

The protein belongs to the nucleoside phosphorylase PpnP family.

It carries out the reaction a purine D-ribonucleoside + phosphate = a purine nucleobase + alpha-D-ribose 1-phosphate. The catalysed reaction is adenosine + phosphate = alpha-D-ribose 1-phosphate + adenine. The enzyme catalyses cytidine + phosphate = cytosine + alpha-D-ribose 1-phosphate. It catalyses the reaction guanosine + phosphate = alpha-D-ribose 1-phosphate + guanine. It carries out the reaction inosine + phosphate = alpha-D-ribose 1-phosphate + hypoxanthine. The catalysed reaction is thymidine + phosphate = 2-deoxy-alpha-D-ribose 1-phosphate + thymine. The enzyme catalyses uridine + phosphate = alpha-D-ribose 1-phosphate + uracil. It catalyses the reaction xanthosine + phosphate = alpha-D-ribose 1-phosphate + xanthine. Functionally, catalyzes the phosphorolysis of diverse nucleosides, yielding D-ribose 1-phosphate and the respective free bases. Can use uridine, adenosine, guanosine, cytidine, thymidine, inosine and xanthosine as substrates. Also catalyzes the reverse reactions. This chain is Pyrimidine/purine nucleoside phosphorylase, found in Salmonella arizonae (strain ATCC BAA-731 / CDC346-86 / RSK2980).